A 228-amino-acid polypeptide reads, in one-letter code: Uracil-DNA glycosylase (228 aa).

Aspartate 71 serves as the catalytic Proton acceptor.

The protein belongs to the uracil-DNA glycosylase (UDG) superfamily. UNG family.

Its subcellular location is the cytoplasm. The catalysed reaction is Hydrolyzes single-stranded DNA or mismatched double-stranded DNA and polynucleotides, releasing free uracil.. Functionally, excises uracil residues from the DNA which can arise as a result of misincorporation of dUMP residues by DNA polymerase or due to deamination of cytosine. In Thermobifida fusca (strain YX), this protein is Uracil-DNA glycosylase.